Consider the following 76-residue polypeptide: Pigment-dispersing hormone A peptides (76 aa).

A signal peptide spans 1-20 (MRSAMVVLVLVAMVAVFTRA). A73 bears the Alanine amide mark.

The protein belongs to the arthropod PDH family. As to expression, optical ganglia of the eyestalk.

The protein localises to the secreted. In terms of biological role, the pigment-dispersing hormone causes the migration of the distal retinal pigment into the proximal end of the pigment chromatophore cells and thus decreases the amount of light entering the retinulas. May also function as a neurotransmitter and/or neuromodulator. The chain is Pigment-dispersing hormone A peptides from Faxonius limosus (Spinycheek crayfish).